Reading from the N-terminus, the 506-residue chain is MCKLNIFDPVQNYENLNQQLNLRRNKLNNLRKQGKTFTNNFKRNVISNQLFLQYGEKNNETLKTLNIQVSLAGRMINRRIMGKASFVILQDSGGTIQLYLSSKNLSDSFYNEHFKKWDLGDILGVHGRLFKTKTGELTINCNEIILLTKALRPIPNKFHGIVDKQIRYRQRYLDLITNKNSFNLFKTRSQIITEIRQFLNKEDFIEVETPILQSLPGGATARPFITYHNALDMNLYLRIAPELYLKQLIIGGFEKIFEINRNFRNEGLSAHHNPEFTMMELYIAYADYHDVMLLTQNLLNTITNHVLGTNIIQYGNLKLDFSKNFVKMTMKEAICHYNKQILSKHLDDKMQAITCAKNIGIHIDQKWGLGRIQTEIFEKTTEKHLLQPTFITSYPIEVSPLARRNDNNPFFADRFELFIGGYEIGNGFSELNDYEDQANRLIEQATIKNSGDNESMFYDEDYIIALEHGLPPTAGLGIGIDRLVMLLTNSHFIRDVILFPTMRLKI.

Positions 416 and 423 each coordinate Mg(2+).

Belongs to the class-II aminoacyl-tRNA synthetase family. In terms of assembly, homodimer. Mg(2+) is required as a cofactor.

The protein resides in the cytoplasm. The enzyme catalyses tRNA(Lys) + L-lysine + ATP = L-lysyl-tRNA(Lys) + AMP + diphosphate. The protein is Lysine--tRNA ligase of Baumannia cicadellinicola subsp. Homalodisca coagulata.